We begin with the raw amino-acid sequence, 106 residues long: Iron-sulfur cluster assembly protein CyaY (106 aa).

It belongs to the frataxin family.

In terms of biological role, involved in iron-sulfur (Fe-S) cluster assembly. May act as a regulator of Fe-S biogenesis. The protein is Iron-sulfur cluster assembly protein CyaY of Escherichia coli O127:H6 (strain E2348/69 / EPEC).